The sequence spans 185 residues: Ribosome-recycling factor (185 aa).

Belongs to the RRF family.

Its subcellular location is the cytoplasm. Functionally, responsible for the release of ribosomes from messenger RNA at the termination of protein biosynthesis. May increase the efficiency of translation by recycling ribosomes from one round of translation to another. This Aliivibrio fischeri (strain MJ11) (Vibrio fischeri) protein is Ribosome-recycling factor.